A 264-amino-acid polypeptide reads, in one-letter code: MRAYHDLLRRILDDGVAKHDRTGTGTLSVFGHQMRFDLAEGFPLVTTKRLHLKSIIHELLWFLAGDTNVAYLQSNGVTIWDEWADEHGDLGPVYGRQWRSWAKPDGGSVDQIAWVLDEIRRNPDSRRLVVSAWNPADLDRMALAPCHCLFQFYIAERRLSCQLYQRSADAFLGVPFNIASYALLTAMMAHVLDLEPGDFVHTLGDAHLYSNHVAQARQQLARDERPLPRLRLNPEVRSLFDFRYDDVVIEGYDPHPAIRAPVAV.

Position 21 (arginine 21) interacts with dUMP. Histidine 51 provides a ligand contact to (6R)-5,10-methylene-5,6,7,8-tetrahydrofolate. 126–127 (RR) provides a ligand contact to dUMP. Cysteine 146 functions as the Nucleophile in the catalytic mechanism. DUMP is bound by residues 166–169 (RSAD), asparagine 177, and 207–209 (HLY). A (6R)-5,10-methylene-5,6,7,8-tetrahydrofolate-binding site is contributed by aspartate 169. A (6R)-5,10-methylene-5,6,7,8-tetrahydrofolate-binding site is contributed by alanine 263.

It belongs to the thymidylate synthase family. Bacterial-type ThyA subfamily. In terms of assembly, homodimer.

It is found in the cytoplasm. The enzyme catalyses dUMP + (6R)-5,10-methylene-5,6,7,8-tetrahydrofolate = 7,8-dihydrofolate + dTMP. It functions in the pathway pyrimidine metabolism; dTTP biosynthesis. Its function is as follows. Catalyzes the reductive methylation of 2'-deoxyuridine-5'-monophosphate (dUMP) to 2'-deoxythymidine-5'-monophosphate (dTMP) while utilizing 5,10-methylenetetrahydrofolate (mTHF) as the methyl donor and reductant in the reaction, yielding dihydrofolate (DHF) as a by-product. This enzymatic reaction provides an intracellular de novo source of dTMP, an essential precursor for DNA biosynthesis. This chain is Thymidylate synthase, found in Methylobacterium nodulans (strain LMG 21967 / CNCM I-2342 / ORS 2060).